Here is a 359-residue protein sequence, read N- to C-terminus: Decorin (359 aa).

The N-terminal stretch at 1–16 (MKATIILLLLAQVSWA) is a signal peptide. Residues 17 to 30 (GPFQQRGLFDFMLE) constitute a propeptide that is removed on maturation. An O-linked (Xyl...) (glycosaminoglycan) serine glycan is attached at Ser34. 2 disulfide bridges follow: Cys54–Cys60 and Cys58–Cys67. LRR repeat units follow at residues 73 to 93 (DKVP…NNKI), 94 to 117 (TEIK…NNKI), 118 to 141 (SKVS…KNQL), 142 to 162 (KELP…ENEI), 163 to 186 (TKVR…TNPL), 187 to 212 (KSSG…DTNI), 213 to 233 (TSIP…GNKI), 234 to 257 (SRVD…FNSI), 258 to 281 (SAVD…NNKL), 282 to 304 (TRVP…NNNI), 305 to 334 (SVVG…SNPV), and 335 to 359 (QYWE…GNYK). Asn211 carries N-linked (GlcNAc...) asparagine glycosylation. Residues Asn262 and Asn303 are each glycosylated (N-linked (GlcNAc...) asparagine). Cys313 and Cys346 are disulfide-bonded.

It belongs to the small leucine-rich proteoglycan (SLRP) family. SLRP class I subfamily. In terms of assembly, binds to type I and type II collagen, fibronectin and TGF-beta. Forms a ternary complex with MFAP2 and ELN. Interacts with DPT. Post-translationally, the attached glycosaminoglycan chain can be either chondroitin sulfate or dermatan sulfate depending upon the tissue of origin. Detected in placenta (at protein level). Detected in cerebrospinal fluid, fibroblasts and urine (at protein level).

Its subcellular location is the secreted. It is found in the extracellular space. The protein localises to the extracellular matrix. Functionally, may affect the rate of fibrils formation. The polypeptide is Decorin (DCN) (Homo sapiens (Human)).